A 194-amino-acid chain; its full sequence is Probable GTP-binding protein EngB (194 aa).

The 173-residue stretch at 22–194 folds into the EngB-type G domain; the sequence is LFLEVAFAGR…WQELDTMLNP (173 aa). Residues 30-37, 57-61, 75-78, 142-145, and 173-175 contribute to the GTP site; these read GRSNVGKS, GCTQL, DLPG, TKAD, and FSS. The Mg(2+) site is built by S37 and T59.

It belongs to the TRAFAC class TrmE-Era-EngA-EngB-Septin-like GTPase superfamily. EngB GTPase family. Mg(2+) is required as a cofactor.

Functionally, necessary for normal cell division and for the maintenance of normal septation. The chain is Probable GTP-binding protein EngB from Desulforapulum autotrophicum (strain ATCC 43914 / DSM 3382 / VKM B-1955 / HRM2) (Desulfobacterium autotrophicum).